Consider the following 105-residue polypeptide: Putative thioredoxin-5 (105 aa).

The 104-residue stretch at 1–104 folds into the Thioredoxin domain; the sequence is MYKEPKNESE…VALENMVKKL (104 aa). Catalysis depends on nucleophile residues C30 and C33. The cysteines at positions 30 and 33 are disulfide-linked.

Belongs to the thioredoxin family.

Its function is as follows. Participates in various redox reactions through the reversible oxidation of its active center dithiol to a disulfide and catalyzes dithiol-disulfide exchange reactions. The polypeptide is Putative thioredoxin-5 (trxE) (Dictyostelium discoideum (Social amoeba)).